Consider the following 318-residue polypeptide: Phosphoenolpyruvate transferase (318 aa).

Residue Asp-50 coordinates 7,8-didemethyl-8-hydroxy-5-deazariboflavin.

The protein belongs to the CofD family. In terms of assembly, homodimer. Requires Mg(2+) as cofactor.

It catalyses the reaction enolpyruvoyl-2-diphospho-5'-guanosine + 7,8-didemethyl-8-hydroxy-5-deazariboflavin = dehydro coenzyme F420-0 + GMP + H(+). It participates in cofactor biosynthesis; coenzyme F420 biosynthesis. Its function is as follows. Catalyzes the transfer of the phosphoenolpyruvate moiety from enoylpyruvoyl-2-diphospho-5'-guanosine (EPPG) to 7,8-didemethyl-8-hydroxy-5-deazariboflavin (FO) with the formation of dehydro coenzyme F420-0 and GMP. This is Phosphoenolpyruvate transferase from Streptomyces griseus subsp. griseus (strain JCM 4626 / CBS 651.72 / NBRC 13350 / KCC S-0626 / ISP 5235).